The following is a 385-amino-acid chain: Eukaryotic translation initiation factor 3 subunit M (385 aa).

The region spanning 180-342 (NSELASKVMI…RKVHISSTMH (163 aa)) is the PCI domain.

Belongs to the eIF-3 subunit M family. In terms of assembly, component of the eukaryotic translation initiation factor 3 (eIF-3) complex.

It is found in the cytoplasm. In terms of biological role, component of the eukaryotic translation initiation factor 3 (eIF-3) complex, which is involved in protein synthesis of a specialized repertoire of mRNAs and, together with other initiation factors, stimulates binding of mRNA and methionyl-tRNAi to the 40S ribosome. The eIF-3 complex specifically targets and initiates translation of a subset of mRNAs involved in cell proliferation. The protein is Eukaryotic translation initiation factor 3 subunit M of Anopheles gambiae (African malaria mosquito).